Consider the following 252-residue polypeptide: Probable oligoribonuclease (252 aa).

The Exonuclease domain maps to 81 to 241 (VWIDCEMTGL…ALSDILESIG (161 aa)). Residue Tyr202 is part of the active site.

It belongs to the oligoribonuclease family.

Its subcellular location is the cytoplasm. The protein localises to the nucleus. 3'-to-5' exoribonuclease specific for small oligoribonucleotides. The protein is Probable oligoribonuclease (rex2) of Schizosaccharomyces pombe (strain 972 / ATCC 24843) (Fission yeast).